The sequence spans 339 residues: uncharacterized protein (339 aa).

The protein to bacterial alkanal monooxygenase alpha and beta chains.

This is an uncharacterized protein from Bacillus subtilis (strain 168).